A 683-amino-acid polypeptide reads, in one-letter code: UvrABC system protein B (683 aa).

In terms of domain architecture, Helicase ATP-binding spans A31–E414. Position 44–51 (G44–T51) interacts with ATP. The Beta-hairpin signature appears at Y97–I120. The Helicase C-terminal domain occupies Q435–I601. A UVR domain is found at K632–S667. Positions M662–R683 are disordered. Positions R669–R683 are enriched in basic residues.

Belongs to the UvrB family. Forms a heterotetramer with UvrA during the search for lesions. Interacts with UvrC in an incision complex.

It localises to the cytoplasm. The UvrABC repair system catalyzes the recognition and processing of DNA lesions. A damage recognition complex composed of 2 UvrA and 2 UvrB subunits scans DNA for abnormalities. Upon binding of the UvrA(2)B(2) complex to a putative damaged site, the DNA wraps around one UvrB monomer. DNA wrap is dependent on ATP binding by UvrB and probably causes local melting of the DNA helix, facilitating insertion of UvrB beta-hairpin between the DNA strands. Then UvrB probes one DNA strand for the presence of a lesion. If a lesion is found the UvrA subunits dissociate and the UvrB-DNA preincision complex is formed. This complex is subsequently bound by UvrC and the second UvrB is released. If no lesion is found, the DNA wraps around the other UvrB subunit that will check the other stand for damage. This is UvrABC system protein B from Lactobacillus acidophilus (strain ATCC 700396 / NCK56 / N2 / NCFM).